The primary structure comprises 381 residues: L-lactate dehydrogenase (381 aa).

The FMN hydroxy acid dehydrogenase domain occupies 1–380 (MIISASTDYR…TRDSLVRELG (380 aa)). Y24 is a binding site for substrate. Residues S106 and Q127 each coordinate FMN. Residue Y129 participates in substrate binding. FMN is bound at residue T155. R164 contributes to the substrate binding site. Residue K251 coordinates FMN. Residue H275 is the Proton acceptor of the active site. Substrate is bound at residue R278. FMN is bound at residue 306–330 (DSGIRSGLDVVRMIALGADTVLIGR).

The protein belongs to the FMN-dependent alpha-hydroxy acid dehydrogenase family. Homotetramer. The cofactor is FMN.

Its subcellular location is the cell inner membrane. It carries out the reaction (S)-lactate + A = pyruvate + AH2. In terms of biological role, catalyzes the conversion of L-lactate to pyruvate. Is coupled to the respiratory chain. This chain is L-lactate dehydrogenase, found in Pseudomonas entomophila (strain L48).